A 1205-amino-acid chain; its full sequence is A disintegrin and metalloproteinase with thrombospondin motifs 3 (1205 aa).

The signal sequence occupies residues 1–20; that stretch reads MVLLSLWLIAAALVEVRTSA. Positions 21–249 are excised as a propeptide; sequence DGQAGNEEMV…QLNETMRRRR (229 aa). N83, N119, N242, and N345 each carry an N-linked (GlcNAc...) asparagine glycan. Residues 256 to 460 enclose the Peptidase M12B domain; the sequence is YNIEVLLGVD…HSYDCLLDDP (205 aa). 3 disulfide bridges follow: C333–C382, C376–C455, and C415–C441. H398 is a binding site for Zn(2+). E399 is a catalytic residue. Zn(2+) contacts are provided by H402 and H408. Residues 470-550 enclose the Disintegrin domain; the sequence is ELPGINYSMD…MWKNANQQKQ (81 aa). N475 carries N-linked (GlcNAc...) asparagine glycosylation. Intrachain disulfides connect C482-C507, C493-C516, C502-C535, C529-C540, C563-C600, C567-C605, and C578-C590. Residues 551–606 form the TSP type-1 1 domain; the sequence is DGNWGSWTKFGSCSRTCGTGVRFRTRQCNNPMPINGGQDCPGVNFEYQLCNTEECQ. The segment at 713 to 844 is spacer; the sequence is RTVKGTFTRT…NSNNVIQEEL (132 aa). N-linked (GlcNAc...) asparagine glycosylation is present at N814. TSP type-1 domains are found at residues 845–905, 906–965, and 966–1014; these read DTFE…QECT, HPLW…NRVP, and CPAQ…QLPP. N942 carries an N-linked (GlcNAc...) asparagine glycan. Cystine bridges form between C978/C1010, C982/C1015, and C993/C999. The 40-residue stretch at 1015 to 1054 folds into the PLAC domain; the sequence is CNDEPCLGDKSIFCQMEVLARYCSIPGYNKLCCESCSKRS. Positions 1174–1205 are disordered; that stretch reads DSIGASSQARTSKKDGKIIDNRRPTRSSTLER. A compositionally biased stretch (basic and acidic residues) spans 1185 to 1205; that stretch reads SKKDGKIIDNRRPTRSSTLER.

It depends on Zn(2+) as a cofactor. Post-translationally, the precursor is cleaved by a furin endopeptidase. In terms of processing, glycosylated. Can be O-fucosylated by POFUT2 on a serine or a threonine residue found within the consensus sequence C1-X(2)-(S/T)-C2-G of the TSP type-1 repeat domains where C1 and C2 are the first and second cysteine residue of the repeat, respectively. Fucosylated repeats can then be further glycosylated by the addition of a beta-1,3-glucose residue by the glucosyltransferase, B3GALTL. Fucosylation mediates the efficient secretion of ADAMTS family members. Can also be C-glycosylated with one or two mannose molecules on tryptophan residues within the consensus sequence W-X-X-W of the TPRs, and N-glycosylated. These other glycosylations can also facilitate secretion. Found in cartilage and skin.

It localises to the secreted. Its subcellular location is the extracellular space. The protein localises to the extracellular matrix. Its function is as follows. Cleaves the propeptides of type II collagen prior to fibril assembly. Does not act on types I and III collagens. The chain is A disintegrin and metalloproteinase with thrombospondin motifs 3 (ADAMTS3) from Homo sapiens (Human).